A 207-amino-acid chain; its full sequence is Glutathione S-transferase 4 (207 aa).

In terms of domain architecture, GST N-terminal spans 2–79 (PNYKLLYFDA…YLARKFGLAG (78 aa)). Residues Tyr-8, Trp-39, Lys-43, 49 to 51 (GQL), and 63 to 64 (QS) each bind glutathione. Residues 81-207 (TAEEEAYADS…YVATRKDSIV (127 aa)) enclose the GST C-terminal domain.

The protein belongs to the GST superfamily. Sigma family.

It catalyses the reaction RX + glutathione = an S-substituted glutathione + a halide anion + H(+). Conjugation of reduced glutathione to a wide number of exogenous and endogenous hydrophobic electrophiles. May play a role in the detoxification of reactive oxygen species produced during pathogenic bacterial infection. This chain is Glutathione S-transferase 4, found in Caenorhabditis elegans.